Here is a 65-residue protein sequence, read N- to C-terminus: Large ribosomal subunit protein bL35 (65 aa).

Residues 1-15 are compositionally biased toward basic residues; that stretch reads MPKMKTKSSAKKRFS. Positions 1 to 21 are disordered; that stretch reads MPKMKTKSSAKKRFSIRAGGS.

The protein belongs to the bacterial ribosomal protein bL35 family.

The chain is Large ribosomal subunit protein bL35 from Dechloromonas aromatica (strain RCB).